The sequence spans 520 residues: MAGPERWGPLLLCLLQAAPGRPRLAPPQNVTLLSQNFSVYLTWLPGLGNPQDVTYFVAYQSSPTRRRWREVEECAGTKELLCSMMCLKKQDLYNKFKGRVRTVSPSSKSPWVESEYLDYLFEVEPAPPVLVLTQTEEILSANATYQLPPCMPPLDLKYEVAFWKEGAGNKTLFPVTPHGQPVQITLQPAASEHHCLSARTIYTFSVPKYSKFSKPTCFLLEVPEANWAFLVLPSLLILLLVIAAGGVIWKTLMGNPWFQRAKMPRALDFSGHTHPVATFQPSRPESVNDLFLCPQKELTRGVRPTPRVRAPATQQTRWKKDLAEDEEEEDEEDTEDGVSFQPYIEPPSFLGQEHQAPGHSEAGGVDSGRPRAPLVPSEGSSAWDSSDRSWASTVDSSWDRAGSSGYLAEKGPGQGPGGDGHQESLPPPEFSKDSGFLEELPEDNLSSWATWGTLPPEPNLVPGGPPVSLQTLTFCWESSPEEEEEARESEIEDSDAGSWGAESTQRTEDRGRTLGHYMAR.

The first 20 residues, 1 to 20 (MAGPERWGPLLLCLLQAAPG), serve as a signal peptide directing secretion. Residues 21–228 (RPRLAPPQNV…LLEVPEANWA (208 aa)) lie on the Extracellular side of the membrane. A Fibronectin type-III domain is found at 26–126 (PPQNVTLLSQ…LDYLFEVEPA (101 aa)). Residues asparagine 29 and asparagine 36 are each glycosylated (N-linked (GlcNAc...) asparagine). Disulfide bonds link cysteine 74/cysteine 82 and cysteine 86/cysteine 150. N-linked (GlcNAc...) asparagine glycans are attached at residues asparagine 142 and asparagine 169. Cysteine 195 and cysteine 217 are oxidised to a cystine. A helical transmembrane segment spans residues 229–249 (FLVLPSLLILLLVIAAGGVIW). The Cytoplasmic portion of the chain corresponds to 250–520 (KTLMGNPWFQ…GRTLGHYMAR (271 aa)). 2 disordered regions span residues 302–439 (VRPT…FLEE) and 477–520 (ESSP…YMAR). The span at 323–336 (AEDEEEEDEEDTED) shows a compositional bias: acidic residues. The segment covering 380–392 (SSAWDSSDRSWAS) has biased composition (low complexity). The span at 479 to 495 (SPEEEEEARESEIEDSD) shows a compositional bias: acidic residues.

It belongs to the type II cytokine receptor family. As to quaternary structure, heterodimer with IL10RB. Ubiquitinated by FBXO45-containing E3 ligase leading to proteasomal degradation. Widely expressed.

The protein resides in the membrane. Its function is as follows. The IFNLR1/IL10RB dimer is a receptor for the cytokine ligands IFNL2 and IFNL3 and mediates their antiviral activity. The ligand/receptor complex stimulate the activation of the JAK/STAT signaling pathway leading to the expression of IFN-stimulated genes (ISG), which contribute to the antiviral state. Determines the cell type specificity of the lambda interferon action. Shows a more restricted pattern of expression in the epithelial tissues thereby limiting responses to lambda interferons primarily to epithelial cells of the respiratory, gastrointestinal, and reproductive tracts. Seems not to be essential for early virus-activated host defense in vaginal infection, but plays an important role in Toll-like receptor (TLR)-induced antiviral defense. Plays a significant role in the antiviral immune defense in the intestinal epithelium. In Homo sapiens (Human), this protein is Interferon lambda receptor 1 (IFNLR1).